Consider the following 633-residue polypeptide: Extracellular metalloproteinase 3 (633 aa).

A signal peptide spans M1–A18. The propeptide occupies H19–S246. N410 is a glycosylation site (N-linked (GlcNAc...) asparagine). H429 provides a ligand contact to Zn(2+). E430 is an active-site residue. Position 433 (H433) interacts with Zn(2+). Residues N480 and N622 are each glycosylated (N-linked (GlcNAc...) asparagine).

This sequence belongs to the peptidase M36 family. Zn(2+) is required as a cofactor.

The protein localises to the secreted. Its function is as follows. Secreted metalloproteinase probably acting as a virulence factor. This chain is Extracellular metalloproteinase 3 (MEP3), found in Trichophyton tonsurans (Scalp ringworm fungus).